Here is a 300-residue protein sequence, read N- to C-terminus: GTPase Era (300 aa).

The region spanning 8 to 176 (RCGYVAIVGR…EAQIAKHLPE (169 aa)) is the Era-type G domain. The segment at 16-23 (GRPNVGKS) is G1. A GTP-binding site is contributed by 16–23 (GRPNVGKS). The tract at residues 42–46 (QTTRH) is G2. Residues 63 to 66 (DTPG) are G3. Residues 63–67 (DTPGM) and 125–128 (NKTD) contribute to the GTP site. Residues 125–128 (NKTD) form a G4 region. A G5 region spans residues 155 to 157 (ISA). In terms of domain architecture, KH type-2 spans 199-283 (VREKIMRQLG…MLNLWVKVKG (85 aa)).

This sequence belongs to the TRAFAC class TrmE-Era-EngA-EngB-Septin-like GTPase superfamily. Era GTPase family. As to quaternary structure, monomer.

The protein localises to the cytoplasm. Its subcellular location is the cell inner membrane. Functionally, an essential GTPase that binds both GDP and GTP, with rapid nucleotide exchange. Plays a role in 16S rRNA processing and 30S ribosomal subunit biogenesis and possibly also in cell cycle regulation and energy metabolism. The polypeptide is GTPase Era (Pseudomonas entomophila (strain L48)).